The primary structure comprises 151 residues: UPF0208 membrane protein YfbV (151 aa).

Residues 1–45 (MSTPDNRSVNFFSLFCRGQHYSKTWPLEKRLAPVFVENRVIKMTR) lie on the Cytoplasmic side of the membrane. A helical membrane pass occupies residues 46–65 (YAIRFMPPIAVFTLCWQIAL). Topologically, residues 66–68 (GGQ) are periplasmic. Residues 69-91 (LGPAVATALFALSLPMQGLWWLG) traverse the membrane as a helical segment. At 92-151 (KRSVTPLPPAILNWFYEVRGKLQESGQVLAPVEGKPDYQALADTLKRAFKQLDKTFLDDL) the chain is on the cytoplasmic side.

This sequence belongs to the UPF0208 family.

It localises to the cell inner membrane. The polypeptide is UPF0208 membrane protein YfbV (yfbV) (Escherichia coli O6:H1 (strain CFT073 / ATCC 700928 / UPEC)).